The chain runs to 323 residues: tRNA U34 carboxymethyltransferase (323 aa).

Carboxy-S-adenosyl-L-methionine-binding positions include Lys-91, Trp-105, Lys-110, Gly-130, 152–154 (DPT), 181–182 (IE), Met-196, Tyr-200, and Arg-315.

Belongs to the class I-like SAM-binding methyltransferase superfamily. CmoB family. As to quaternary structure, homotetramer.

It catalyses the reaction carboxy-S-adenosyl-L-methionine + 5-hydroxyuridine(34) in tRNA = 5-carboxymethoxyuridine(34) in tRNA + S-adenosyl-L-homocysteine + H(+). Functionally, catalyzes carboxymethyl transfer from carboxy-S-adenosyl-L-methionine (Cx-SAM) to 5-hydroxyuridine (ho5U) to form 5-carboxymethoxyuridine (cmo5U) at position 34 in tRNAs. The chain is tRNA U34 carboxymethyltransferase from Escherichia coli O157:H7.